The following is an 88-amino-acid chain: MQQKSSSQKLINVGFGNFVVASRVVAIVNPSSSPMRRLREDARQEGRLVDATQGRKTRSIIITDSNHVILSAIQAETVGQRYTQEDAD.

It belongs to the RemA family.

The chain is Putative regulatory protein DvMF_1139 from Nitratidesulfovibrio vulgaris (strain DSM 19637 / Miyazaki F) (Desulfovibrio vulgaris).